The sequence spans 267 residues: Tryptophan synthase alpha chain (267 aa).

Active-site proton acceptor residues include Glu-49 and Asp-60.

It belongs to the TrpA family. As to quaternary structure, tetramer of two alpha and two beta chains.

It carries out the reaction (1S,2R)-1-C-(indol-3-yl)glycerol 3-phosphate + L-serine = D-glyceraldehyde 3-phosphate + L-tryptophan + H2O. Its pathway is amino-acid biosynthesis; L-tryptophan biosynthesis; L-tryptophan from chorismate: step 5/5. The alpha subunit is responsible for the aldol cleavage of indoleglycerol phosphate to indole and glyceraldehyde 3-phosphate. This Acinetobacter baylyi (strain ATCC 33305 / BD413 / ADP1) protein is Tryptophan synthase alpha chain.